We begin with the raw amino-acid sequence, 220 residues long: Deoxyribose-phosphate aldolase (220 aa).

The active-site Proton donor/acceptor is the Asp89. Lys151 functions as the Schiff-base intermediate with acetaldehyde in the catalytic mechanism. Residue Lys180 is the Proton donor/acceptor of the active site.

It belongs to the DeoC/FbaB aldolase family. DeoC type 1 subfamily.

It localises to the cytoplasm. The catalysed reaction is 2-deoxy-D-ribose 5-phosphate = D-glyceraldehyde 3-phosphate + acetaldehyde. It participates in carbohydrate degradation; 2-deoxy-D-ribose 1-phosphate degradation; D-glyceraldehyde 3-phosphate and acetaldehyde from 2-deoxy-alpha-D-ribose 1-phosphate: step 2/2. Its function is as follows. Catalyzes a reversible aldol reaction between acetaldehyde and D-glyceraldehyde 3-phosphate to generate 2-deoxy-D-ribose 5-phosphate. This Streptococcus pneumoniae serotype 4 (strain ATCC BAA-334 / TIGR4) protein is Deoxyribose-phosphate aldolase.